The chain runs to 875 residues: Leucine--tRNA ligase (875 aa).

The segment covering 1-20 (MPSAGSVNAANPAVDTSAQT) has biased composition (polar residues). Residues 1-22 (MPSAGSVNAANPAVDTSAQTGR) form a disordered region. Residues 60–70 (PYPSGSLHMGH) carry the 'HIGH' region motif. A 'KMSKS' region motif is present at residues 634 to 638 (KMSKS). K637 lines the ATP pocket.

The protein belongs to the class-I aminoacyl-tRNA synthetase family.

It localises to the cytoplasm. The catalysed reaction is tRNA(Leu) + L-leucine + ATP = L-leucyl-tRNA(Leu) + AMP + diphosphate. In Synechococcus sp. (strain CC9605), this protein is Leucine--tRNA ligase.